Reading from the N-terminus, the 157-residue chain is Transcriptional repressor NrdR (157 aa).

Residues 3 to 34 (CPFCGHAESQVKDSRPSEDGAAIRRRRMCPEC) fold into a zinc finger. The region spanning 49–139 (LIIVKRSGRR…VYRDFKETSD (91 aa)) is the ATP-cone domain.

Belongs to the NrdR family. The cofactor is Zn(2+).

Negatively regulates transcription of bacterial ribonucleotide reductase nrd genes and operons by binding to NrdR-boxes. In Caulobacter vibrioides (strain ATCC 19089 / CIP 103742 / CB 15) (Caulobacter crescentus), this protein is Transcriptional repressor NrdR.